A 493-amino-acid polypeptide reads, in one-letter code: Ectonucleoside triphosphate diphosphohydrolase 8 (493 aa).

The Cytoplasmic segment spans residues 1–7 (MEYKGKV). Residues 8-28 (VAGLLTATCVFSIIALILSAV) traverse the membrane as a helical segment. The Extracellular segment spans residues 29-463 (DVKDVFLPPG…ALEHVKGHEP (435 aa)). Residues asparagine 65, asparagine 79, and asparagine 133 are each glycosylated (N-linked (GlcNAc...) asparagine). The cysteines at positions 76 and 100 are disulfide-linked. The active-site Proton acceptor is glutamate 166. Residues asparagine 223, asparagine 234, asparagine 267, asparagine 324, asparagine 330, asparagine 361, asparagine 372, asparagine 382, and asparagine 445 are each glycosylated (N-linked (GlcNAc...) asparagine). Residues cysteine 244 and cysteine 291 are joined by a disulfide bond. Cysteine 327 and cysteine 333 form a disulfide bridge. A disulfide bond links cysteine 379 and cysteine 401. A helical transmembrane segment spans residues 464 to 486 (SLWAGAISFIVLAIVAGLVAILL). The Cytoplasmic segment spans residues 487 to 493 (QCFWKSK).

The protein belongs to the GDA1/CD39 NTPase family. Ca(2+) serves as cofactor. Mg(2+) is required as a cofactor. In terms of processing, N-glycosylated.

Its subcellular location is the cell membrane. It carries out the reaction a ribonucleoside 5'-triphosphate + 2 H2O = a ribonucleoside 5'-phosphate + 2 phosphate + 2 H(+). Functionally, canalicular ectonucleoside NTPDase responsible for the main hepatic NTPDase activity. Ectonucleoside ATPases catalyze the hydrolysis of gamma- and beta-phosphate residues of nucleotides, playing a central role in concentration of extracellular nucleotides. In Gallus gallus (Chicken), this protein is Ectonucleoside triphosphate diphosphohydrolase 8 (ENTPD8).